The sequence spans 1485 residues: Sex-determining transformer protein 2 (1485 aa).

An N-terminal signal peptide occupies residues 1-28; that stretch reads MSLRSNKLLVAAVIFTVVTFGLLLTSSI. The next 9 helical transmembrane spans lie at 438–458, 490–510, 584–604, 732–752, 923–943, 950–970, 980–1000, 1033–1053, and 1063–1083; these read VVYF…FFAW, IELN…NTYL, WPFI…FVDI, GILL…VMLI, LLAS…FSIT, LIFS…ISLF, DSAV…LSLF, AQVF…AGVV, and TVIL…VLVA. Positions 1131–1271 are interaction with fem-3; that stretch reads DFHIRPTNMS…MLHMIEKVQK (141 aa). Residues 1143–1175 are disordered; that stretch reads YAPPPAKKRAKQTNNETDPEKKEDEPGTSNANN. Residues 1181 to 1201 form a helical membrane-spanning segment; it reads AAHRLAILPWHFVLGGIPVDL. Disordered stretches follow at residues 1228-1252, 1275-1306, and 1348-1384; these read SELE…PAPE, EKEA…PSHR, and EMPP…PPHP. The span at 1275-1284 shows a compositional bias: basic and acidic residues; it reads EKEAKEKVHQ. Positions 1401-1422 are MX regulatory domain; required for tra-1 binding; that stretch reads CEDVYWTYNDGRLPPNVAMPPR. Positions 1442-1485 are disordered; that stretch reads PPGQPSIPIPAEAMALREERARAHREQEQRDNSQSPSPSPEPGL. Basic and acidic residues predominate over residues 1456–1472; that stretch reads ALREERARAHREQEQRD.

In terms of assembly, interacts with tra-1 and fem-3. As to expression, somatic and germline tissues.

The protein localises to the membrane. In terms of biological role, plays a major role in controlling sexual cell fates. Promotes female development in XX animals where it sequesters one or more of the FEM proteins to the membrane thereby freeing the tra-1 protein (a putative transcription factor) to enter the nucleus and promote female development. In XO animals it acts as a receptor for her-1 which prevents it from binding to FEM proteins thereby repressing the activity of tra-1. Negatively regulates male development when bound to fem-3 and is required together with tra-1 for promoting spermatogenesis. This is Sex-determining transformer protein 2 from Caenorhabditis remanei (Caenorhabditis vulgaris).